We begin with the raw amino-acid sequence, 119 residues long: Putative membrane protein insertion efficiency factor (119 aa).

It belongs to the UPF0161 family.

It localises to the cell inner membrane. Functionally, could be involved in insertion of integral membrane proteins into the membrane. The chain is Putative membrane protein insertion efficiency factor from Brucella anthropi (strain ATCC 49188 / DSM 6882 / CCUG 24695 / JCM 21032 / LMG 3331 / NBRC 15819 / NCTC 12168 / Alc 37) (Ochrobactrum anthropi).